A 1460-amino-acid polypeptide reads, in one-letter code: MAGRPLRIGDQLVLEEDYDETYIPSEQEILEFAREIGIDPIKEPELMWLAREGIVAPLPGEWKPCQDITGDIYYFNFANGQSMWDHPCDEHYRSLVIQERAKLSTSGAIKKKKKKKEKKDKKDRDPPKSSLALGSSLAPVHVPLGGLAPLRGLVDTPPSALRGSQSVSLGSSVESGRQLGELMLPSQGLKTSAYTKGLLGSIYEDKTALSLLGLGEETNEEDEEESDNQSVHSSSEPLRNLHLDIGALGGDFEYEESLRTSQPEEKKDVSLDSDAAGPPTPCKPSSPGADSSLSSAVGKGRQGSGARPGLPEKEENEKSEPKICRNLVTPKADPTGSEPAKASEKEAPEDTVDAGEEGSRREEAAKEPKKKASALEEGSSDASQELEISEHMKEPQLSDSIASDPKSFHGLDFGFRSRISEHLLDVDVLSPVLGGACRQAQQPLGIEDKDDSQSSQDELQSKQSKGLEERLSPPLPHEERAQSPPRSLATEEEPPQGPEGQPEWKEAEELGEDSAASLSLQLSLQREQAPSPPAACEKGKEQHSQAEELGPGQEEAEDPEEKVAVSPTPPVSPEVRSTEPVAPPEQLSEAALKAMEEAVAQVLEQDQRHLLESKQEKMQQLREKLCQEEEEEILRLHQQKEQSLSSLRERLQKAIEEEEARMREEESQRLSWLRAQVQSSTQADEDQIRAEQEASLQKLREELESQQKAERASLEQKNRQMLEQLKEEIEASEKSEQAALNAAKEKALQQLREQLEGERKEAVATLEKEHSAELERLCSSLEAKHREVVSSLQKKIQEAQQKEEAQLQKCLGQVEHRVHQKSYHVAGYEHELSSLLREKRQEVEGEHERRLDKMKEEHQQVMAKAREQYEAEERKQRAELLGHLTGELERLQRAHERELETVRQEQHKRLEDLRRRHREQERKLQDLELDLETRAKDVKARLALLEVQEETARREKQQLLDVQRQVALKSEEATATHQQLEEAQKEHTHLLQSNQQLREILDELQARKLKLESQVDLLQAQSQQLQKHFSSLEAEAQKKQHLLREVTVEENNASPHFEPDLHIEDLRKSLGTNQTKEVSSSLSQSKEDLYLDSLSSHNVWHLLSAEGVALRSAKEFLVQQTRSMRRRQTALKAAQQHWRHELASAQEVAKDPPGIKALEDMRKNLEKETRHLDEMKSAMRKGHNLLKKKEEKLNQLESSLWEEASDEGTLGGSPTKKAVTFDLSDMDSLSSESSESFSPPHREWWRQQRIDSTPSLTSRKIHGLSHSLRQISSQLSSVLSILDSLNPQSPPPLLASMPAQLPPRDPKSTPTPTYYGSLARFSALSSATPTSTQWAWDSGQGPRLPSSVAQTVDDFLLEKWRKYFPSGIPLLSNSPTPLESRLGYMSASEQLRLLQHSHSQVPEAGSTTFQGIIEANRRWLERVKNDPRLPLFSSTPKPKATLSLLQLGLDEHNRVKVYRF.

Residues 1–194 are interaction with ATRIP; it reads MAGRPLRIGD…PSQGLKTSAY (194 aa). A WW domain is found at 56–89; the sequence is APLPGEWKPCQDITGDIYYFNFANGQSMWDHPCD. The interval 107 to 135 is disordered; that stretch reads GAIKKKKKKKEKKDKKDRDPPKSSLALGS. Positions 109-119 are enriched in basic residues; it reads IKKKKKKKEKK. Serine 186 is modified (phosphoserine; by ATR and ATM). Serine 201 bears the Phosphoserine mark. Disordered regions lie at residues 213–412, 440–593, and 658–719; these read GLGE…HGLD, AQQP…AALK, and EEAR…QKNR. Positions 217–227 are enriched in acidic residues; sequence ETNEEDEEESD. Residues 256–270 show a composition bias toward basic and acidic residues; it reads ESLRTSQPEEKKDVS. A compositionally biased stretch (low complexity) spans 285–296; that stretch reads SSPGADSSLSSA. Basic and acidic residues-rich tracts occupy residues 310–323 and 357–367; these read LPEK…EPKI and EGSRREEAAKE. The span at 453–464 shows a compositional bias: low complexity; it reads QSSQDELQSKQS. The span at 465 to 481 shows a compositional bias: basic and acidic residues; the sequence is KGLEERLSPPLPHEERA. Low complexity predominate over residues 514–525; that stretch reads SAASLSLQLSLQ. The span at 537–546 shows a compositional bias: basic and acidic residues; sequence EKGKEQHSQA. Serine 566 is modified (phosphoserine). 2 stretches are compositionally biased toward basic and acidic residues: residues 658–668 and 686–719; these read EEARMREEESQ and DQIR…QKNR. Residues 1154-1206 are a coiled coil; it reads GIKALEDMRKNLEKETRHLDEMKSAMRKGHNLLKKKEEKLNQLESSLWEEASD. The tract at residues 1290–1310 is disordered; that stretch reads PPPLLASMPAQLPPRDPKSTP. 3 positions are modified to phosphoserine: serine 1386, serine 1388, and serine 1443.

In terms of assembly, interacts (via N-terminus) with ATRIP. Interacts with ATM, ATR and MDC1. Interacts with XPA (via N-terminus) upon UV irradiation. Interacts with CEP83, CCDC92, TTBK2, DVL3, NPHP3 and weakly with NPHP4. Interacts with DZIP1. Post-translationally, phosphorylation at Ser-186 is induced upon DNA-damage caused by treatment with IR irradiation, UV irradiation, hydroxyurea or amphidicolin. Also MDC1-mediated chromatin remodeling is critical for DNA damage-induced phosphorylation. Expressed in several cell lines.

Its subcellular location is the cytoplasm. It localises to the cytoskeleton. The protein resides in the microtubule organizing center. The protein localises to the centrosome. It is found in the centriole. Its subcellular location is the nucleus. In terms of biological role, plays a role in microtubule organization and/or maintenance for the formation of primary cilia (PC), a microtubule-based structure that protrudes from the surface of epithelial cells. Plays a critical role in G2/M checkpoint and nuclear divisions. A key player in the DNA damage-activated ATR/ATM signaling cascade since it is required for the proper phosphorylation of H2AX, RPA, CHEK2 and CHEK1. Plays a critical role in chromosome segregation, acting as a mediator required for the maintenance of genomic stability through modulation of MDC1, RPA and CHEK1. This is Centrosomal protein of 164 kDa (CEP164) from Homo sapiens (Human).